Here is a 200-residue protein sequence, read N- to C-terminus: Rho-related protein racH (200 aa).

Residue 11–18 (GDMSVGKT) participates in GTP binding. Positions 33–41 (YVPTVFDNY) match the Effector region motif. GTP contacts are provided by residues 58 to 62 (DTAGS) and 117 to 120 (TKLD). The segment at 178–200 (EELAKSKKDSKKGDKDSKDCIIQ) is disordered. C197 is subject to Cysteine methyl ester. A lipid anchor (S-geranylgeranyl cysteine) is attached at C197. A propeptide spans 198–200 (IIQ) (removed in mature form).

This sequence belongs to the small GTPase superfamily. Rho family.

It is found in the cell membrane. This Dictyostelium discoideum (Social amoeba) protein is Rho-related protein racH (racH).